We begin with the raw amino-acid sequence, 239 residues long: DNA repair protein RecO (239 aa).

This sequence belongs to the RecO family.

In terms of biological role, involved in DNA repair and RecF pathway recombination. The sequence is that of DNA repair protein RecO from Stenotrophomonas maltophilia (strain R551-3).